The primary structure comprises 128 residues: Small ribosomal subunit protein eS8 (128 aa).

It belongs to the eukaryotic ribosomal protein eS8 family. Part of the 30S ribosomal subunit.

The protein is Small ribosomal subunit protein eS8 of Methanococcus vannielii (strain ATCC 35089 / DSM 1224 / JCM 13029 / OCM 148 / SB).